The sequence spans 489 residues: Squalene monooxygenase (489 aa).

The helical transmembrane segment at 10–30 (VTYDALIVGAGVIGPCVATAL) threads the bilayer. Residues 21–22 (VI), 41–42 (ER), Arg-49, Arg-151, Val-167, Asp-328, and Met-341 contribute to the FAD site. Helical transmembrane passes span 426–446 (FLAG…AVAF) and 464–484 (ALLE…PFLV).

Belongs to the squalene monooxygenase family. The cofactor is FAD.

The protein localises to the microsome membrane. It is found in the endoplasmic reticulum membrane. The catalysed reaction is squalene + reduced [NADPH--hemoprotein reductase] + O2 = (S)-2,3-epoxysqualene + oxidized [NADPH--hemoprotein reductase] + H2O + H(+). It participates in terpene metabolism; lanosterol biosynthesis; lanosterol from farnesyl diphosphate: step 2/3. Catalyzes the stereospecific oxidation of squalene to (S)-2,3-epoxysqualene, and is considered to be a rate-limiting enzyme in steroid biosynthesis. This Candida glabrata (strain ATCC 2001 / BCRC 20586 / JCM 3761 / NBRC 0622 / NRRL Y-65 / CBS 138) (Yeast) protein is Squalene monooxygenase (ERG1).